The sequence spans 359 residues: Trans-enoyl reductase mpsG (359 aa).

Residues tyrosine 212, leucine 259, and threonine 278 each contribute to the NADP(+) site.

It belongs to the zinc-containing alcohol dehydrogenase family. As to quaternary structure, monomer.

It participates in secondary metabolite biosynthesis. In terms of biological role, trans-enoyl reductase; part of the gene cluster that mediates the biosynthesis of macrophasetins, 3-decalinoyltetramic acids (DTAs) which feature a tetramate (pyrrolidine-2,4-dione) unit connected to a decalin fragment and that have potent bioactivities. The PKS-NRPS mpsA together with its associated enoylreductase partner mpsG incorporate one unit of acetyl-CoA, seven units of malonyl-CoA, and one unit of L-alanine to assemble the linear tetramic acid intermediate corresponding to the backbone of macrophasetins. Without the Diels-Alderase mpsD, the mpsA/G product can undergo the non-enzymatic intramolecular Diels-Alder (IMDA) reaction to generate both macrophasetin A and macrophasetin B. Catalyzed by mpsD, the linear tetramic acid intermediate is thoroughly converted to macrophasetin A via the endo-IMDA reaction in a regioselective and stereoselective manner. Finally, the cytochrome P450 monooxygenase mpsF catalyzes the hydroxylation at C20 to yield the end product macrophasetin C. The sequence is that of Trans-enoyl reductase mpsG from Macrophomina phaseolina (strain MS6) (Charcoal rot fungus).